A 166-amino-acid polypeptide reads, in one-letter code: MAKDHYFDISAKLDMMEMKNAIEQAKKEVSTRFDFKGIMVEIDLNEKAKVLNLSSSSDSKIDALKDIVMSKMIKRGLSTKSLDEVKTEGISGGNVKVVYRIVDSIEKDEAKKIVKAIKDAKLKVTPSIQGDEIRVTGKKIDDLQAVIALVKQMEDLKAPLTFGNFK.

It belongs to the YajQ family.

Functionally, nucleotide-binding protein. This is Nucleotide-binding protein SUN_0226 from Sulfurovum sp. (strain NBC37-1).